Consider the following 331-residue polypeptide: Ketol-acid reductoisomerase (NADP(+)) (331 aa).

A KARI N-terminal Rossmann domain is found at 2–182; that stretch reads AKLFYDSDAD…GGTRAGILET (181 aa). Residues 25–28, Ser51, Ser53, and 83–86 each bind NADP(+); these read YGSQ and DEFQ. His108 is an active-site residue. Residue Gly134 coordinates NADP(+). In terms of domain architecture, KARI C-terminal knotted spans 183–328; the sequence is NFKEETETDL…KTLRSMFSWL (146 aa). The Mg(2+) site is built by Asp191, Glu195, Glu227, and Glu231. Ser252 is a binding site for substrate.

The protein belongs to the ketol-acid reductoisomerase family. Mg(2+) is required as a cofactor.

It carries out the reaction (2R)-2,3-dihydroxy-3-methylbutanoate + NADP(+) = (2S)-2-acetolactate + NADPH + H(+). It catalyses the reaction (2R,3R)-2,3-dihydroxy-3-methylpentanoate + NADP(+) = (S)-2-ethyl-2-hydroxy-3-oxobutanoate + NADPH + H(+). It participates in amino-acid biosynthesis; L-isoleucine biosynthesis; L-isoleucine from 2-oxobutanoate: step 2/4. The protein operates within amino-acid biosynthesis; L-valine biosynthesis; L-valine from pyruvate: step 2/4. Its function is as follows. Involved in the biosynthesis of branched-chain amino acids (BCAA). Catalyzes an alkyl-migration followed by a ketol-acid reduction of (S)-2-acetolactate (S2AL) to yield (R)-2,3-dihydroxy-isovalerate. In the isomerase reaction, S2AL is rearranged via a Mg-dependent methyl migration to produce 3-hydroxy-3-methyl-2-ketobutyrate (HMKB). In the reductase reaction, this 2-ketoacid undergoes a metal-dependent reduction by NADPH to yield (R)-2,3-dihydroxy-isovalerate. This chain is Ketol-acid reductoisomerase (NADP(+)), found in Prochlorococcus marinus (strain NATL1A).